Reading from the N-terminus, the 326-residue chain is ATP synthase subunit b 2 (326 aa).

The chain crosses the membrane as a helical span at residues 2–22 (LIDWFTVVAQALNFLILVWLL). Basic and acidic residues-rich tracts occupy residues 275–298 (QQGR…RKEN) and 306–326 (PPPE…IGSP). The interval 275 to 326 (QQGRKEGRAVQNWDKAESEIRKENLSPAKTEPPPEAKAKPKPEEPKPEIGSP) is disordered.

Belongs to the ATPase B chain family. As to quaternary structure, F-type ATPases have 2 components, F(1) - the catalytic core - and F(0) - the membrane proton channel. F(1) has five subunits: alpha(3), beta(3), gamma(1), delta(1), epsilon(1). F(0) has three main subunits: a(1), b(2) and c(10-14). The alpha and beta chains form an alternating ring which encloses part of the gamma chain. F(1) is attached to F(0) by a central stalk formed by the gamma and epsilon chains, while a peripheral stalk is formed by the delta and b chains.

The protein resides in the cell inner membrane. F(1)F(0) ATP synthase produces ATP from ADP in the presence of a proton or sodium gradient. F-type ATPases consist of two structural domains, F(1) containing the extramembraneous catalytic core and F(0) containing the membrane proton channel, linked together by a central stalk and a peripheral stalk. During catalysis, ATP synthesis in the catalytic domain of F(1) is coupled via a rotary mechanism of the central stalk subunits to proton translocation. In terms of biological role, component of the F(0) channel, it forms part of the peripheral stalk, linking F(1) to F(0). This chain is ATP synthase subunit b 2, found in Albidiferax ferrireducens (strain ATCC BAA-621 / DSM 15236 / T118) (Rhodoferax ferrireducens).